We begin with the raw amino-acid sequence, 252 residues long: Triosephosphate isomerase (252 aa).

Residue 9-11 (NWK) participates in substrate binding. Catalysis depends on H98, which acts as the Electrophile. The Proton acceptor role is filled by E170. Residues G176 and S215 each coordinate substrate.

This sequence belongs to the triosephosphate isomerase family. Homodimer.

Its subcellular location is the cytoplasm. The enzyme catalyses D-glyceraldehyde 3-phosphate = dihydroxyacetone phosphate. Its pathway is carbohydrate biosynthesis; gluconeogenesis. It functions in the pathway carbohydrate degradation; glycolysis; D-glyceraldehyde 3-phosphate from glycerone phosphate: step 1/1. Involved in the gluconeogenesis. Catalyzes stereospecifically the conversion of dihydroxyacetone phosphate (DHAP) to D-glyceraldehyde-3-phosphate (G3P). The polypeptide is Triosephosphate isomerase (Buchnera aphidicola subsp. Baizongia pistaciae (strain Bp)).